The following is a 115-amino-acid chain: Large ribosomal subunit protein bL19 (115 aa).

It belongs to the bacterial ribosomal protein bL19 family.

Functionally, this protein is located at the 30S-50S ribosomal subunit interface and may play a role in the structure and function of the aminoacyl-tRNA binding site. The sequence is that of Large ribosomal subunit protein bL19 from Koribacter versatilis (strain Ellin345).